The sequence spans 431 residues: Enolase (431 aa).

Residue glutamine 164 coordinates (2R)-2-phosphoglycerate. Glutamate 206 (proton donor) is an active-site residue. Positions 243, 288, and 315 each coordinate Mg(2+). (2R)-2-phosphoglycerate is bound by residues lysine 340, arginine 369, serine 370, and lysine 391. Lysine 340 (proton acceptor) is an active-site residue.

Belongs to the enolase family. Mg(2+) is required as a cofactor.

The protein localises to the cytoplasm. Its subcellular location is the secreted. It is found in the cell surface. The enzyme catalyses (2R)-2-phosphoglycerate = phosphoenolpyruvate + H2O. It participates in carbohydrate degradation; glycolysis; pyruvate from D-glyceraldehyde 3-phosphate: step 4/5. In terms of biological role, catalyzes the reversible conversion of 2-phosphoglycerate (2-PG) into phosphoenolpyruvate (PEP). It is essential for the degradation of carbohydrates via glycolysis. This Fervidobacterium nodosum (strain ATCC 35602 / DSM 5306 / Rt17-B1) protein is Enolase.